A 180-amino-acid polypeptide reads, in one-letter code: Large ribosomal subunit protein uL5c (180 aa).

The protein belongs to the universal ribosomal protein uL5 family. In terms of assembly, part of the 50S ribosomal subunit; contacts the 5S rRNA.

Its subcellular location is the plastid. The protein resides in the chloroplast. Its function is as follows. Binds 5S rRNA, forms part of the central protuberance of the 50S subunit. The protein is Large ribosomal subunit protein uL5c (rpl5) of Oedogonium cardiacum (Filamentous green alga).